A 159-amino-acid polypeptide reads, in one-letter code: Trafficking protein particle complex subunit 6A (159 aa).

At S33 the chain carries Phosphoserine.

This sequence belongs to the TRAPP small subunits family. BET3 subfamily. Part of the multisubunit transport protein particle (TRAPP) complex. Heterodimer with TRAPPC3. The heterodimer TRAPPC3-TRAPPC6A interacts with TRAPPC2L. Interacts with TRAPPC2L.

The protein localises to the golgi apparatus. The protein resides in the cis-Golgi network. It localises to the endoplasmic reticulum. May play a role in vesicular transport during the biogenesis of melanosomes. In Homo sapiens (Human), this protein is Trafficking protein particle complex subunit 6A.